The chain runs to 425 residues: MTKALDGVRVLDFTHVQSGPTCTQLLAWFGADVIKVERPGSGDITRGQLQDIPKVDSLYFTMLNHNKRSITLDTKNPKGKEVLTALIRTCDVLVENFGPGVLDRMGFTWEKIQEINPRMIVASIKGFGPGPYEDCKVYENVAQCTGGAASTTGFREGLPLVTGAQIGDSGTGLHLALGIVTALYQRHHTGRGQRVTAAMQDGVLNLCRVKLRDQQRLDHGPLKEYSQFGEGIPFGDAVPRAGNDSGGGQPGRILKCKGWEQDPNAYIYVITQAPVWEKICDVIGETGWKTHPDYATPPARLSRLNEIFARIEQWTMTKTKFEAMEILNADDIPCGPILSMKELAEDQSLRATGTIVEVDHPTRGKYLSVGNPIKLSDSPTEVKRSPLLGEHTDEILRDVLGYSDAHVAEIHDSGATAPPRKQAAE.

CoA-binding positions include 17 to 18, arginine 38, 72 to 75, 96 to 98, arginine 104, and 136 to 139; these read QS, LDTK, NFG, and KVYE. The Nucleophile role is filled by aspartate 168. Substrate is bound at residue 247–249; sequence GGQ.

This sequence belongs to the CoA-transferase III family. Frc subfamily. As to quaternary structure, homodimer.

The catalysed reaction is formyl-CoA + oxalate = oxalyl-CoA + formate. It participates in metabolic intermediate degradation; oxalate degradation; CO(2) and formate from oxalate: step 1/2. Functionally, involved in the catabolism of oxalate and in the adapatation to low pH via the induction of the oxalate-dependent acid tolerance response (ATR). Catalyzes the transfer of the CoA moiety from formyl-CoA to oxalate. In Rhodopseudomonas palustris (strain ATCC BAA-98 / CGA009), this protein is Formyl-CoA:oxalate CoA-transferase.